Consider the following 619-residue polypeptide: Phosphomethylpyrimidine synthase (619 aa).

Positions 1-11 (MHEQRSLTMNA) are enriched in polar residues. Residues 1-25 (MHEQRSLTMNALTPAVSTGPLPASR) form a disordered region. Substrate is bound by residues Asn-220, Met-249, Tyr-278, His-314, 334–336 (SRG), 375–378 (DGLR), and Glu-414. Residue His-418 coordinates Zn(2+). Position 441 (Tyr-441) interacts with substrate. His-482 is a binding site for Zn(2+). 3 residues coordinate [4Fe-4S] cluster: Cys-562, Cys-565, and Cys-570.

This sequence belongs to the ThiC family. In terms of assembly, homodimer. Requires [4Fe-4S] cluster as cofactor.

It catalyses the reaction 5-amino-1-(5-phospho-beta-D-ribosyl)imidazole + S-adenosyl-L-methionine = 4-amino-2-methyl-5-(phosphooxymethyl)pyrimidine + CO + 5'-deoxyadenosine + formate + L-methionine + 3 H(+). Its pathway is cofactor biosynthesis; thiamine diphosphate biosynthesis. Its function is as follows. Catalyzes the synthesis of the hydroxymethylpyrimidine phosphate (HMP-P) moiety of thiamine from aminoimidazole ribotide (AIR) in a radical S-adenosyl-L-methionine (SAM)-dependent reaction. In Mesorhizobium japonicum (strain LMG 29417 / CECT 9101 / MAFF 303099) (Mesorhizobium loti (strain MAFF 303099)), this protein is Phosphomethylpyrimidine synthase.